A 463-amino-acid chain; its full sequence is MAESRTFTGLLAATAVGVYLLVLAGATTTLTDAAAACTTWPLCDGPVDVTNTALLVAWGHRLVAAAVGLLVVAMAVVGLRSGCRGRVKAAIIIGAVLYPVQIALGAIVATSAETALPGAHLALGMGIFGSFVLALAWHLEAETGSDDETPVKNPTPAPEPAGDDTPDRTPALTFRERLVGTASAYFRLMKPRLMWLLCLVAAAGMALAAGQTLTVRTVLLTLGGGVLSIGASGTFNHVLERDIDKRMDRTSDRPIATHQIPVRNALAFGLLLSFASLWLFWQVNALVAVLGLTAIVFYSVIYTLVLKPNTVQNTVLGGAAGALPALIGWVAADGSVGLPGVVLAVIIFLWTPAHFYNLALAYKDDYEAGGFPMMPVVRGETETRKHIVYYLGATLIASGILGVLTPLGWLYAVTSVLLGAVFLWAVVLLHREQTEAAAFRAFHASNAYLGAVLIAIVVDALAL.

Positions 1–193 (MAESRTFTGL…AYFRLMKPRL (193 aa)) are unknown. Transmembrane regions (helical) follow at residues 6 to 26 (TFTG…LAGA), 54 to 74 (LLVA…VVAM), 89 to 109 (AAII…AIVA), and 115 to 135 (ALPG…VLAL). A disordered region spans residues 144–170 (GSDDETPVKNPTPAPEPAGDDTPDRTP). 9 helical membrane passes run 193-213 (LMWL…GQTL), 218-238 (VLLT…FNHV), 265-285 (ALAF…QVNA), 286-306 (LVAV…TLVL), 314-334 (TVLG…AADG), 336-356 (VGLP…AHFY), 387-407 (IVYY…LTPL), 409-429 (WLYA…VVLL), and 441-461 (AFHA…VDAL). The interval 194–460 (MWLLCLVAAA…AVLIAIVVDA (267 aa)) is protoheme IX prenyltransferase.

In the C-terminal section; belongs to the UbiA prenyltransferase family. Protoheme IX farnesyltransferase subfamily.

It is found in the cell membrane. It catalyses the reaction heme b + (2E,6E)-farnesyl diphosphate + H2O = Fe(II)-heme o + diphosphate. It participates in porphyrin-containing compound metabolism; heme O biosynthesis; heme O from protoheme: step 1/1. Converts heme B (protoheme IX) to heme O by substitution of the vinyl group on carbon 2 of heme B porphyrin ring with a hydroxyethyl farnesyl side group. This is Protoheme IX farnesyltransferase (ctaB) from Haloarcula marismortui (strain ATCC 43049 / DSM 3752 / JCM 8966 / VKM B-1809) (Halobacterium marismortui).